A 75-amino-acid polypeptide reads, in one-letter code: Small ribosomal subunit protein bS18 (75 aa).

It belongs to the bacterial ribosomal protein bS18 family. As to quaternary structure, part of the 30S ribosomal subunit. Forms a tight heterodimer with protein bS6.

Functionally, binds as a heterodimer with protein bS6 to the central domain of the 16S rRNA, where it helps stabilize the platform of the 30S subunit. This is Small ribosomal subunit protein bS18 from Laribacter hongkongensis (strain HLHK9).